The chain runs to 398 residues: Bifunctional enzyme IspD/IspF (398 aa).

A 2-C-methyl-D-erythritol 4-phosphate cytidylyltransferase region spans residues 1-237; sequence MSISIAAIIL…QKKMQMFPDI (237 aa). The segment at 238–398 is 2-C-methyl-D-erythritol 2,4-cyclodiphosphate synthase; sequence RVGNGYDVHS…SVLYPGEIPQ (161 aa). D244 and H246 together coordinate a divalent metal cation. 4-CDP-2-C-methyl-D-erythritol 2-phosphate contacts are provided by residues 244 to 246 and 270 to 271; these read DVH and HS. H278 serves as a coordination point for a divalent metal cation. 4-CDP-2-C-methyl-D-erythritol 2-phosphate-binding positions include 292–294, 368–371, F375, and R378; these read DIG and TTNE.

In the N-terminal section; belongs to the IspD/TarI cytidylyltransferase family. IspD subfamily. This sequence in the C-terminal section; belongs to the IspF family. It depends on a divalent metal cation as a cofactor.

The catalysed reaction is 2-C-methyl-D-erythritol 4-phosphate + CTP + H(+) = 4-CDP-2-C-methyl-D-erythritol + diphosphate. The enzyme catalyses 4-CDP-2-C-methyl-D-erythritol 2-phosphate = 2-C-methyl-D-erythritol 2,4-cyclic diphosphate + CMP. It participates in isoprenoid biosynthesis; isopentenyl diphosphate biosynthesis via DXP pathway; isopentenyl diphosphate from 1-deoxy-D-xylulose 5-phosphate: step 2/6. Its pathway is isoprenoid biosynthesis; isopentenyl diphosphate biosynthesis via DXP pathway; isopentenyl diphosphate from 1-deoxy-D-xylulose 5-phosphate: step 4/6. Bifunctional enzyme that catalyzes the formation of 4-diphosphocytidyl-2-C-methyl-D-erythritol from CTP and 2-C-methyl-D-erythritol 4-phosphate (MEP) (IspD), and catalyzes the conversion of 4-diphosphocytidyl-2-C-methyl-D-erythritol 2-phosphate (CDP-ME2P) to 2-C-methyl-D-erythritol 2,4-cyclodiphosphate (ME-CPP) with a corresponding release of cytidine 5-monophosphate (CMP) (IspF). This chain is Bifunctional enzyme IspD/IspF, found in Bartonella tribocorum (strain CIP 105476 / IBS 506).